The sequence spans 132 residues: Small ribosomal subunit protein uS8 (132 aa).

It belongs to the universal ribosomal protein uS8 family. As to quaternary structure, part of the 30S ribosomal subunit. Contacts proteins S5 and S12.

One of the primary rRNA binding proteins, it binds directly to 16S rRNA central domain where it helps coordinate assembly of the platform of the 30S subunit. The sequence is that of Small ribosomal subunit protein uS8 from Rickettsia felis (strain ATCC VR-1525 / URRWXCal2) (Rickettsia azadi).